The primary structure comprises 512 residues: D-alanine--D-alanyl carrier protein ligase (512 aa).

152 to 153 (TS) is a binding site for ATP. D-alanine is bound at residue Asp199. Residue 294–299 (NAYGPT) coordinates ATP. A D-alanine-binding site is contributed by Val303. Residues Asp385, 397–400 (YGGR), and Lys499 each bind ATP. Lys499 is a D-alanine binding site.

Belongs to the ATP-dependent AMP-binding enzyme family. DltA subfamily.

It is found in the cytoplasm. The catalysed reaction is holo-[D-alanyl-carrier protein] + D-alanine + ATP = D-alanyl-[D-alanyl-carrier protein] + AMP + diphosphate. The protein operates within cell wall biogenesis; lipoteichoic acid biosynthesis. Its function is as follows. Catalyzes the first step in the D-alanylation of lipoteichoic acid (LTA), the activation of D-alanine and its transfer onto the D-alanyl carrier protein (Dcp) DltC. In an ATP-dependent two-step reaction, forms a high energy D-alanyl-AMP intermediate, followed by transfer of the D-alanyl residue as a thiol ester to the phosphopantheinyl prosthetic group of the Dcp. D-alanylation of LTA plays an important role in modulating the properties of the cell wall in Gram-positive bacteria, influencing the net charge of the cell wall. This chain is D-alanine--D-alanyl carrier protein ligase, found in Streptococcus pyogenes serotype M1.